Here is a 105-residue protein sequence, read N- to C-terminus: Nucleoid-associated protein Ccur92_18190 (105 aa).

Belongs to the YbaB/EbfC family. In terms of assembly, homodimer.

It is found in the cytoplasm. It localises to the nucleoid. Its function is as follows. Binds to DNA and alters its conformation. May be involved in regulation of gene expression, nucleoid organization and DNA protection. The chain is Nucleoid-associated protein Ccur92_18190 from Campylobacter curvus (strain 525.92).